The chain runs to 683 residues: Leucine-rich repeat and calponin homology domain-containing protein 4 (683 aa).

A compositionally biased stretch (low complexity) spans 1–18; the sequence is MAAAVAAPLAAGGEEAAA. Residues 1–34 form a disordered region; it reads MAAAVAAPLAAGGEEAAATTSVPGSPGLPGRRSA. 9 LRR repeats span residues 41-64, 67-90, 92-113, 114-136, 138-158, 159-181, 182-204, 206-226, and 227-250; these read AVATGTLNLSNRRLKHFPRGAARS, LSDITQADLSRNRFPEVPEAACQL, SLEGLSLYHNCLRCLNPALGNL, TALTYLNLSRNQLSLLPPYICQL, LRVLIVSNNKLGALPPDIGTL, GSLRQLDVSSNELQSLPSELCGL, SSLRDLNVRRNQLSTLPEELGDL, LVRLDFSCNRVSRIPVSFCRL, and RHLQVILLDSNPLQSPPAQVCLKG. The segment at 268–292 is disordered; sequence ALGDLAPSRPPSFSPCPAEDLFPGH. Phosphoserine occurs at positions 279, 281, 304, 307, 309, and 313. Disordered regions lie at residues 326–436 and 449–539; these read FRIS…LLKP and STQA…DEKD. 3 stretches are compositionally biased toward basic and acidic residues: residues 330-345, 357-376, and 384-418; these read ELAREPRGPRERKEDG, IDSHVPGEDEERGTVEEQRP, and GDRERAPSSRREEPAGEERRRPDTLQLWQERERRQ. Ser-432 and Ser-457 each carry phosphoserine. Residues 449-460 show a composition bias toward polar residues; it reads STQAMHNGSPKS. 2 stretches are compositionally biased toward low complexity: residues 461-481 and 511-524; these read SASQAGAAAGQGAPAPAPASQ and SSSQSGSGPSSPDS. Ser-511, Ser-513, Ser-517, Ser-521, and Ser-589 each carry phosphoserine. One can recognise a Calponin-homology (CH) domain in the interval 534–647; that stretch reads VPDEKDLMTQ…ALEAVKRVGG (114 aa). The helical transmembrane segment at 653-673 threads the bilayer; the sequence is LWPPSGLGGFVVFYVVLMLLL.

Its subcellular location is the cell membrane. Its function is as follows. Accessory protein that regulates signaling by multiple TLRs, acting as a broad-spanning regulator of the innate immune response. In macrophages, binds LPS and promotes proper docking of LPS in lipid raft membrane. May be required for lipid raft maintenance. The polypeptide is Leucine-rich repeat and calponin homology domain-containing protein 4 (Homo sapiens (Human)).